Reading from the N-terminus, the 451-residue chain is Magnesium transporter MgtE (451 aa).

Topologically, residues 1–285 (MVQNMTYDEL…TKAYVAAYRR (285 aa)) are cytoplasmic. Positions 64 and 96 each coordinate Mg(2+). 2 CBS domains span residues 140–203 (MTNR…VQDL) and 204–260 (MFTR…EADE). E218, D228, D249, D252, E257, E260, and D261 together coordinate Mg(2+). Residues 286–306 (LPWLILLLFIGLISGSIISYF) form a helical membrane-spanning segment. At 307-311 (EDALK) the chain is on the extracellular side. The chain crosses the membrane as a helical span at residues 312–332 (QVVALAFFMPMVSGMTGNTGT). Over 333–371 (QSLAVVIRGLSKEEMNKKTIVRLIFREFRTSIFIGAVCS) the chain is Cytoplasmic. Helical transmembrane passes span 372–392 (VLIA…FVVA) and 393–413 (SSLF…PIIL). At 414–427 (HKLKVDPAIASGPL) the chain is on the cytoplasmic side. The Mg(2+) site is built by D419 and D433. Residues 428 to 448 (ITTLNDILSLLIYFGIATAFI) form a helical membrane-spanning segment. Over 449 to 451 (HSL) the chain is Extracellular.

The protein belongs to the SLC41A transporter family. Homodimer.

The protein resides in the cell membrane. It catalyses the reaction Mg(2+)(in) = Mg(2+)(out). Its activity is regulated as follows. Binds cyclic di-AMP (c-di-AMP), which may regulate the transporter activity. Functionally, acts as a magnesium transporter. MgtE is the dominant transporter under rich-medium growth conditions, and it may provide the primary route of magnesium import in B.subtilis, while the other putative transport proteins are likely to be utilized for more-specialized growth conditions. In Bacillus subtilis (strain 168), this protein is Magnesium transporter MgtE.